Consider the following 164-residue polypeptide: CDP-archaeol synthase (164 aa).

The next 4 helical transmembrane spans lie at 3–23 (LTVFFLLIWPPYVANGSAVFA), 55–75 (AIGIATGTVLGYFPNLVYHVI), 77–97 (VFDAFVLSASAVLGDLIGAFI), and 122–142 (FLVYSLFREIPVVYVLAAVVI).

This sequence belongs to the CDP-archaeol synthase family. The cofactor is Mg(2+).

Its subcellular location is the cell membrane. It carries out the reaction 2,3-bis-O-(geranylgeranyl)-sn-glycerol 1-phosphate + CTP + H(+) = CDP-2,3-bis-O-(geranylgeranyl)-sn-glycerol + diphosphate. It participates in membrane lipid metabolism; glycerophospholipid metabolism. Functionally, catalyzes the formation of CDP-2,3-bis-(O-geranylgeranyl)-sn-glycerol (CDP-archaeol) from 2,3-bis-(O-geranylgeranyl)-sn-glycerol 1-phosphate (DGGGP) and CTP. This reaction is the third ether-bond-formation step in the biosynthesis of archaeal membrane lipids. This Pyrobaculum aerophilum (strain ATCC 51768 / DSM 7523 / JCM 9630 / CIP 104966 / NBRC 100827 / IM2) protein is CDP-archaeol synthase.